A 404-amino-acid chain; its full sequence is MKLPIYLDYSATTPVDPRVAEKMMQFLTMDGTFGNPASRSHRFGWQAEEAVDIARNQIAELVGADPREIVFTSGATESDNLAIKGAANFYQKKGKHIITSKTEHKAVLDTCRQLEREGFEVTYLAPQRNGIIDLKELEAAMRDDTILVSIMHVNNEIGVVQDIATIGEMCRARGIIYHVDATQSVGKLPIDLSQLKVDLMSFSGHKIYGPKGIGALYVRRKPRIRIEAQMHGGGHERGMRSGTLPVHQIVGMGEAYRIAKEEMESEMARLRGLRDRLWNGVKDMEEVYLNGDLEQGAPNILNVSFNYVEGESLIMALKDLAVSSGSACTSASLEPSYVLRALGMTDELAHSSIRFSLGRFTTEEEIDYTINLVRNSIGRLRDLSPLWEMFKQGVDLNSIEWSHH.

Residues 75-76 (AT), asparagine 155, glutamine 183, and 203-205 (SGH) each bind pyridoxal 5'-phosphate. Lysine 206 is modified (N6-(pyridoxal phosphate)lysine). Pyridoxal 5'-phosphate is bound at residue threonine 243. Cysteine 328 serves as the catalytic Cysteine persulfide intermediate. Position 328 (cysteine 328) interacts with [2Fe-2S] cluster.

It belongs to the class-V pyridoxal-phosphate-dependent aminotransferase family. NifS/IscS subfamily. In terms of assembly, homodimer. Forms a heterotetramer with IscU, interacts with other sulfur acceptors. The cofactor is pyridoxal 5'-phosphate.

It localises to the cytoplasm. It catalyses the reaction (sulfur carrier)-H + L-cysteine = (sulfur carrier)-SH + L-alanine. It participates in cofactor biosynthesis; iron-sulfur cluster biosynthesis. Functionally, master enzyme that delivers sulfur to a number of partners involved in Fe-S cluster assembly, tRNA modification or cofactor biosynthesis. Catalyzes the removal of elemental sulfur atoms from cysteine to produce alanine. Functions as a sulfur delivery protein for Fe-S cluster synthesis onto IscU, an Fe-S scaffold assembly protein, as well as other S acceptor proteins. The polypeptide is Cysteine desulfurase IscS (Klebsiella pneumoniae (strain 342)).